Consider the following 97-residue polypeptide: YcgL domain-containing protein Psyr_1564 (97 aa).

Residues 3 to 87 (RICSIYRSPK…AEDDYIEHLP (85 aa)) form the YcgL domain.

In Pseudomonas syringae pv. syringae (strain B728a), this protein is YcgL domain-containing protein Psyr_1564.